A 209-amino-acid chain; its full sequence is Bilin biosynthesis protein RpcF (209 aa).

The protein belongs to the CpcE/RpcE/PecE family.

In terms of biological role, an enzyme involved in the biosynthesis of bilin. Might be involved in the specific attachment of phycoerythrobilin (PEB) to the R-phycocyanin II alpha chain. This chain is Bilin biosynthesis protein RpcF (rpcF), found in Synechococcus sp. (strain WH8020).